The chain runs to 248 residues: DNA repair protein RecO (248 aa).

The protein belongs to the RecO family.

Functionally, involved in DNA repair and RecF pathway recombination. This chain is DNA repair protein RecO, found in Streptomyces griseus subsp. griseus (strain JCM 4626 / CBS 651.72 / NBRC 13350 / KCC S-0626 / ISP 5235).